The sequence spans 299 residues: Zinc finger protein-like 1 homolog (299 aa).

The segment at M1 to W43 adopts a B box-type; degenerate zinc-finger fold. An RING-type; atypical zinc finger spans residues C53 to S101. The tract at residues A200–T231 is disordered. S215 bears the Phosphoserine mark. The chain crosses the membrane as a helical span at residues W256–L276.

It belongs to the ZFPL1 family.

The protein resides in the membrane. The protein is Zinc finger protein-like 1 homolog of Drosophila melanogaster (Fruit fly).